We begin with the raw amino-acid sequence, 433 residues long: Glutamate-1-semialdehyde 2,1-aminomutase (433 aa).

Residue Lys273 is modified to N6-(pyridoxal phosphate)lysine.

This sequence belongs to the class-III pyridoxal-phosphate-dependent aminotransferase family. HemL subfamily. Homodimer. Requires pyridoxal 5'-phosphate as cofactor.

It localises to the cytoplasm. The enzyme catalyses (S)-4-amino-5-oxopentanoate = 5-aminolevulinate. It functions in the pathway porphyrin-containing compound metabolism; protoporphyrin-IX biosynthesis; 5-aminolevulinate from L-glutamyl-tRNA(Glu): step 2/2. The polypeptide is Glutamate-1-semialdehyde 2,1-aminomutase (Ralstonia pickettii (strain 12J)).